The sequence spans 227 residues: Extracellular deoxyribonuclease (227 aa).

The N-terminal stretch at 1–20 (MFRPLLSFTLARLVSLPLHA) is a signal peptide.

Belongs to the EndA/NucM nuclease family.

The protein localises to the secreted. This chain is Extracellular deoxyribonuclease, found in Aeromonas hydrophila.